The primary structure comprises 250 residues: Probable transcriptional regulatory protein RC1_1808 (250 aa).

Positions 1 to 21 are disordered; the sequence is MAGHSQFKNIMHRKGAQDAKR.

Belongs to the TACO1 family.

The protein resides in the cytoplasm. This Rhodospirillum centenum (strain ATCC 51521 / SW) protein is Probable transcriptional regulatory protein RC1_1808.